Here is a 475-residue protein sequence, read N- to C-terminus: Ribulose bisphosphate carboxylase large chain (475 aa).

Positions 1–2 are excised as a propeptide; that stretch reads MS. Residue P3 is modified to N-acetylproline. An N6,N6,N6-trimethyllysine modification is found at K14. Residues N123 and T173 each coordinate substrate. K175 serves as the catalytic Proton acceptor. Residue K177 coordinates substrate. 3 residues coordinate Mg(2+): K201, D203, and E204. An N6-carboxylysine modification is found at K201. H294 (proton acceptor) is an active-site residue. 3 residues coordinate substrate: R295, H327, and S379.

Belongs to the RuBisCO large chain family. Type I subfamily. As to quaternary structure, heterohexadecamer of 8 large chains and 8 small chains; disulfide-linked. The disulfide link is formed within the large subunit homodimers. The cofactor is Mg(2+). The disulfide bond which can form in the large chain dimeric partners within the hexadecamer appears to be associated with oxidative stress and protein turnover.

Its subcellular location is the plastid. The protein localises to the chloroplast. It carries out the reaction 2 (2R)-3-phosphoglycerate + 2 H(+) = D-ribulose 1,5-bisphosphate + CO2 + H2O. The catalysed reaction is D-ribulose 1,5-bisphosphate + O2 = 2-phosphoglycolate + (2R)-3-phosphoglycerate + 2 H(+). Its function is as follows. RuBisCO catalyzes two reactions: the carboxylation of D-ribulose 1,5-bisphosphate, the primary event in carbon dioxide fixation, as well as the oxidative fragmentation of the pentose substrate in the photorespiration process. Both reactions occur simultaneously and in competition at the same active site. In Castanea sativa (Sweet chestnut), this protein is Ribulose bisphosphate carboxylase large chain.